We begin with the raw amino-acid sequence, 135 residues long: uncharacterized protein (135 aa).

2 consecutive transmembrane segments (helical) span residues 11–31 (ILFF…GYLI) and 57–77 (LGTA…TDAI).

The protein localises to the cell membrane. This is an uncharacterized protein from Methanocaldococcus jannaschii (strain ATCC 43067 / DSM 2661 / JAL-1 / JCM 10045 / NBRC 100440) (Methanococcus jannaschii).